Here is a 441-residue protein sequence, read N- to C-terminus: ATP-dependent protease ATPase subunit HslU (441 aa).

ATP contacts are provided by residues Ile-18, 60–65 (GVGKTE), Asp-254, Glu-319, and Arg-391.

It belongs to the ClpX chaperone family. HslU subfamily. In terms of assembly, a double ring-shaped homohexamer of HslV is capped on each side by a ring-shaped HslU homohexamer. The assembly of the HslU/HslV complex is dependent on binding of ATP.

It is found in the cytoplasm. Functionally, ATPase subunit of a proteasome-like degradation complex; this subunit has chaperone activity. The binding of ATP and its subsequent hydrolysis by HslU are essential for unfolding of protein substrates subsequently hydrolyzed by HslV. HslU recognizes the N-terminal part of its protein substrates and unfolds these before they are guided to HslV for hydrolysis. In Shewanella denitrificans (strain OS217 / ATCC BAA-1090 / DSM 15013), this protein is ATP-dependent protease ATPase subunit HslU.